Consider the following 143-residue polypeptide: Transcriptional regulator MraZ (143 aa).

2 consecutive SpoVT-AbrB domains span residues 5 to 47 and 76 to 119; these read EFLH…PMDE and AIEC…ANDA.

This sequence belongs to the MraZ family. Forms oligomers.

The protein localises to the cytoplasm. It is found in the nucleoid. This is Transcriptional regulator MraZ from Oceanobacillus iheyensis (strain DSM 14371 / CIP 107618 / JCM 11309 / KCTC 3954 / HTE831).